We begin with the raw amino-acid sequence, 843 residues long: Protein P (843 aa).

Positions 1–177 (MPLSYQHFRK…FCGSPYSWEQ (177 aa)) are terminal protein domain (TP). Residues 178–346 (DLQHGRLVFQ…YCLCHIVNLI (169 aa)) form a spacer region. Disordered stretches follow at residues 220–269 (KSRL…HNCA) and 291–316 (TSKG…RSRS). Residues 347–690 (EDWGPCTEHG…YLNLYPVARQ (344 aa)) are polymerase/reverse transcriptase domain (RT). One can recognise a Reverse transcriptase domain in the interval 357–600 (EHRIRTPRTP…YSLNFMGYVI (244 aa)). Mg(2+) contacts are provided by aspartate 429, aspartate 551, and aspartate 552.

The protein belongs to the hepadnaviridae P protein family.

The catalysed reaction is DNA(n) + a 2'-deoxyribonucleoside 5'-triphosphate = DNA(n+1) + diphosphate. It catalyses the reaction Endonucleolytic cleavage to 5'-phosphomonoester.. Its activity is regulated as follows. Activated by host HSP70 and HSP40 in vitro to be able to bind the epsilon loop of the pgRNA. Because deletion of the RNase H region renders the protein partly chaperone-independent, the chaperones may be needed indirectly to relieve occlusion of the RNA-binding site by this domain. Inhibited by several reverse-transcriptase inhibitors: Lamivudine, Adefovir and Entecavir. Multifunctional enzyme that converts the viral RNA genome into dsDNA in viral cytoplasmic capsids. This enzyme displays a DNA polymerase activity that can copy either DNA or RNA templates, and a ribonuclease H (RNase H) activity that cleaves the RNA strand of RNA-DNA heteroduplexes in a partially processive 3'- to 5'-endonucleasic mode. Neo-synthesized pregenomic RNA (pgRNA) are encapsidated together with the P protein, and reverse-transcribed inside the nucleocapsid. Initiation of reverse-transcription occurs first by binding the epsilon loop on the pgRNA genome, and is initiated by protein priming, thereby the 5'-end of (-)DNA is covalently linked to P protein. Partial (+)DNA is synthesized from the (-)DNA template and generates the relaxed circular DNA (RC-DNA) genome. After budding and infection, the RC-DNA migrates in the nucleus, and is converted into a plasmid-like covalently closed circular DNA (cccDNA). The activity of P protein does not seem to be necessary for cccDNA generation, and is presumably released from (+)DNA by host nuclear DNA repair machinery. This chain is Protein P, found in Homo sapiens (Human).